Here is a 407-residue protein sequence, read N- to C-terminus: MLRWITAGESHGRALVAVVEGMVAGVEVTSTAIADQLARRRLGYGRGARMAFERDGVTVLSGVRHGVTLGGPIAIEIDNTEWPKWESVMAADPVDAAELEDSARNAPLTRPRPGHADYAGMLKYGFDDARPVLERASARETAARVAAGTIARQFLRQALGVEVLSHVISIGASARYDGPPPGSEDLTVIDASLVRAFDEQVEKSMIAEIEAAKKDGDTLGGVVEAVVLGLPVGLGSFTSGDDRLDSQLAAAVMGIQAIKGVEIGDGFATARRRGSCAHDEMYSGPGGVVRLTNRSGGLEGGMTNGQPLRVRAAMKPISTVPRALATVDLATGEEAIAIHQRSDVCAVPAAGVVVETMVALVLARAALRKFGGDSLGETRRNLAAYQRAVADREAPVAQYCGESGIGG.

2 residues coordinate NADP(+): Arg-40 and Arg-46. FMN is bound by residues 135 to 137 (RAS), 256 to 257 (QA), Gly-300, 315 to 319 (KPIST), and Arg-341.

This sequence belongs to the chorismate synthase family. In terms of assembly, homotetramer. The cofactor is FMNH2.

The catalysed reaction is 5-O-(1-carboxyvinyl)-3-phosphoshikimate = chorismate + phosphate. It functions in the pathway metabolic intermediate biosynthesis; chorismate biosynthesis; chorismate from D-erythrose 4-phosphate and phosphoenolpyruvate: step 7/7. Catalyzes the anti-1,4-elimination of the C-3 phosphate and the C-6 proR hydrogen from 5-enolpyruvylshikimate-3-phosphate (EPSP) to yield chorismate, which is the branch point compound that serves as the starting substrate for the three terminal pathways of aromatic amino acid biosynthesis. This reaction introduces a second double bond into the aromatic ring system. This is Chorismate synthase from Mycobacterium leprae (strain Br4923).